Reading from the N-terminus, the 665-residue chain is MQGVKKRVEKLHDLLNQYSYEYYVQDNPSVPDSEYDKLLHELIEIEEKYPEFKSTDSPTVRVGGEAQSSFEKVNHDTPMLSLGNAFNEEDLRKFDQRIRDSIGKVEYMCELKIDGLAVSLKYENGRFVQGLTRGDGTTGEDITENLRTIHAIPLKIKEPLNFEVRGEAYMPRRSFIHLNNEKEQNGEQPFANPRNAAAGSLRQLDSKLAAKRKLSVFLYSVNDLTEFNATTQSEALEELDQLGFKTNQERERVSDIEGVLNYIEKWTSKRGSLSYDIDGIVIKVNDLSQQEEMGYTQKSPRWAIAYKFPAEEVITKLLDIELSIGRTGVVTPTAILEPVKVAGTTVSRASLHNEDLIHERDIRIGDSVVIKKAGDIIPEVVKSILDRRPNESEIYHMPTHCPSCGHELVRIEGEVALRCINPKCQAQLIEGLIHFVSRQAMNIDGLGTKIIHQLYENQLIKDVADIFYLKEEDLLPLERMGKKKVDNLLLAIEKSKEQSLEHLLFGLGIRHLGVKASQVLAERYETMDQLFKVTESELIEIQDIGDKLAQSVVTYLENSDIRSLIEKLSNKNVNMSYKGIKTTEIEGHPDFSGKTIVLTGKLEQMTRNEASEWLKMQGAKVTNSVTKSTDIVIAGADAGSKLAKAEKYGTEIWTEAAFIEKQNGI.

Residues 32–36, 81–82, and Glu110 each bind NAD(+); these read DSEYD and SL. Catalysis depends on Lys112, which acts as the N6-AMP-lysine intermediate. Residues Arg133, Glu167, Lys283, and Lys307 each coordinate NAD(+). Zn(2+) is bound by residues Cys401, Cys404, Cys419, and Cys424. Residues 586-665 form the BRCT domain; the sequence is EGHPDFSGKT…AAFIEKQNGI (80 aa).

The protein belongs to the NAD-dependent DNA ligase family. LigA subfamily. Mg(2+) is required as a cofactor. Mn(2+) serves as cofactor.

It carries out the reaction NAD(+) + (deoxyribonucleotide)n-3'-hydroxyl + 5'-phospho-(deoxyribonucleotide)m = (deoxyribonucleotide)n+m + AMP + beta-nicotinamide D-nucleotide.. Its function is as follows. DNA ligase that catalyzes the formation of phosphodiester linkages between 5'-phosphoryl and 3'-hydroxyl groups in double-stranded DNA using NAD as a coenzyme and as the energy source for the reaction. It is essential for DNA replication and repair of damaged DNA. This is DNA ligase from Staphylococcus epidermidis (strain ATCC 35984 / DSM 28319 / BCRC 17069 / CCUG 31568 / BM 3577 / RP62A).